The chain runs to 298 residues: Zinc import ATP-binding protein ZnuC (298 aa).

Residues 17–232 (IELRNAGVYR…PEYVRLFGSR (216 aa)) enclose the ABC transporter domain. An ATP-binding site is contributed by 49-56 (GPNGAGKS). Residues 273–298 (RGHCHVEDGHHHDHEHHHHEGGQPRA) form a disordered region. Positions 276–298 (CHVEDGHHHDHEHHHHEGGQPRA) are enriched in basic and acidic residues.

The protein belongs to the ABC transporter superfamily. Zinc importer (TC 3.A.1.15.5) family. The complex is composed of two ATP-binding proteins (ZnuC), two transmembrane proteins (ZnuB) and a solute-binding protein (ZnuA).

It localises to the cell inner membrane. It catalyses the reaction Zn(2+)(out) + ATP(in) + H2O(in) = Zn(2+)(in) + ADP(in) + phosphate(in) + H(+)(in). Its function is as follows. Part of the ABC transporter complex ZnuABC involved in zinc import. Responsible for energy coupling to the transport system. This is Zinc import ATP-binding protein ZnuC from Brucella suis biovar 1 (strain 1330).